The primary structure comprises 286 residues: Mycolic acid methyltransferase MmaA1 (286 aa).

S-adenosyl-L-methionine contacts are provided by residues Y32–T33, G71–G73, T93–H98, and W122–E123. C268 is an active-site residue.

This sequence belongs to the CFA/CMAS family.

The protein operates within lipid metabolism; mycolic acid biosynthesis. Involved in the conversion of a cis-olefin into a trans-olefin with concomitant introduction of an allylic methyl branch at the proximal position of the precursor to both the methoxy and ketomycolic acids. It directly affects the cis- to trans ratio and indirectly affects the keto to methoxy ratio. In Mycobacterium bovis (strain ATCC BAA-935 / AF2122/97), this protein is Mycolic acid methyltransferase MmaA1 (cmaD).